Reading from the N-terminus, the 166-residue chain is MLVIHDRIEPQAEWAAELHLNFEARSKSRLRCFSAENEDVGLFLQRGQSPLRDGEFLQAQDGRVVRVCARPEKLMHVTCSSTFELTRAAYHLGNRHVALQVGDGWLRLLDDYVLKAMLDQLGATVETIEAPFQPEHGAYGGGHHHSRAGEEDFNYPPRMHQFGVRK.

A disordered region spans residues 135–154 (EHGAYGGGHHHSRAGEEDFN).

This sequence belongs to the UreE family.

It is found in the cytoplasm. Functionally, involved in urease metallocenter assembly. Binds nickel. Probably functions as a nickel donor during metallocenter assembly. In Pseudomonas syringae pv. syringae (strain B728a), this protein is Urease accessory protein UreE 2.